Consider the following 230-residue polypeptide: ATP-dependent dethiobiotin synthetase BioD (230 aa).

12 to 17 lines the ATP pocket; the sequence is DVGKTV. Thr-16 contacts Mg(2+). Residue Lys-37 is part of the active site. Substrate is bound at residue Thr-41. Residues Asp-49, 108 to 111, 168 to 169, and 198 to 200 each bind ATP; these read EGAG, GS, and PEG. Asp-49 and Glu-108 together coordinate Mg(2+).

This sequence belongs to the dethiobiotin synthetase family. As to quaternary structure, homodimer. The cofactor is Mg(2+).

It localises to the cytoplasm. The enzyme catalyses (7R,8S)-7,8-diammoniononanoate + CO2 + ATP = (4R,5S)-dethiobiotin + ADP + phosphate + 3 H(+). It participates in cofactor biosynthesis; biotin biosynthesis; biotin from 7,8-diaminononanoate: step 1/2. Functionally, catalyzes a mechanistically unusual reaction, the ATP-dependent insertion of CO2 between the N7 and N8 nitrogen atoms of 7,8-diaminopelargonic acid (DAPA, also called 7,8-diammoniononanoate) to form a ureido ring. This is ATP-dependent dethiobiotin synthetase BioD from Corynebacterium kroppenstedtii (strain DSM 44385 / JCM 11950 / CIP 105744 / CCUG 35717).